A 190-amino-acid polypeptide reads, in one-letter code: Peptidyl-prolyl cis-trans isomerase FKBP20-1 (190 aa).

G2 is modified (N-acetylglycine). Positions 32-121 (LPVVDVHYEG…IFEVELVACR (90 aa)) constitute a PPIase FKBP-type domain. Residues 149 to 163 (AAAKEDDKKKREEAK) are compositionally biased toward basic and acidic residues. A disordered region spans residues 149–190 (AAAKEDDKKKREEAKAAAAARIQAKLDAKKGPGKGKGKGKAK). Basic residues predominate over residues 179-190 (GPGKGKGKGKAK).

This sequence belongs to the FKBP-type PPIase family.

It carries out the reaction [protein]-peptidylproline (omega=180) = [protein]-peptidylproline (omega=0). Functionally, PPIases accelerate the folding of proteins. It catalyzes the cis-trans isomerization of proline imidic peptide bonds in oligopeptides. This chain is Peptidyl-prolyl cis-trans isomerase FKBP20-1 (FKBP20-1), found in Arabidopsis thaliana (Mouse-ear cress).